Reading from the N-terminus, the 227-residue chain is Paired immunoglobulin-like type 2 receptor beta (227 aa).

Residues 1–19 (MGRPLLLPLLLLLQPPAFL) form the signal peptide. Topologically, residues 20–191 (QPGGSTGSGP…WHLSLDTAIR (172 aa)) are extracellular. The Ig-like V-type domain maps to 21–143 (PGGSTGSGPS…SGRQQLQSIK (123 aa)). N-linked (GlcNAc...) asparagine glycosylation occurs at Asn100. A helical transmembrane segment spans residues 192 to 212 (VALAVAVLKTVILGLLCLLLL). At 213–227 (WWRRRKGSRAPSSDF) the chain is on the cytoplasmic side.

The protein localises to the membrane. Its function is as follows. Paired receptors consist of highly related activating and inhibitory receptors and are widely involved in the regulation of the immune system. PILRB is thought to act as a cellular signaling activating receptor that associates with ITAM-bearing adapter molecules on the cell surface. This is Paired immunoglobulin-like type 2 receptor beta (PILRB) from Homo sapiens (Human).